A 120-amino-acid polypeptide reads, in one-letter code: Ribonuclease P protein component (120 aa).

Belongs to the RnpA family. Consists of a catalytic RNA component (M1 or rnpB) and a protein subunit.

It carries out the reaction Endonucleolytic cleavage of RNA, removing 5'-extranucleotides from tRNA precursor.. RNaseP catalyzes the removal of the 5'-leader sequence from pre-tRNA to produce the mature 5'-terminus. It can also cleave other RNA substrates such as 4.5S RNA. The protein component plays an auxiliary but essential role in vivo by binding to the 5'-leader sequence and broadening the substrate specificity of the ribozyme. The polypeptide is Ribonuclease P protein component (Chlamydia trachomatis serovar L2 (strain ATCC VR-902B / DSM 19102 / 434/Bu)).